A 395-amino-acid chain; its full sequence is F-box protein At5g46170 (395 aa).

One can recognise an F-box domain in the interval 24 to 72 (IDHFDHLPDSILLLVFNKIGDVKALGRCCVVSRRFHSLVPQVDNVVVRV). The disordered stretch occupies residues 122 to 158 (TKRSSSSCGGSGSSSSSLSISGDDDGGEIEQGGVTHH). Over residues 125-142 (SSSSCGGSGSSSSSLSIS) the composition is skewed to low complexity.

This Arabidopsis thaliana (Mouse-ear cress) protein is F-box protein At5g46170.